The primary structure comprises 499 residues: DAZ protein 1 (499 aa).

The disordered stretch occupies residues 1 to 29 (MMSPPLRYQKDQQNQQHQQNQSQQAAHQM). Low complexity predominate over residues 12–28 (QQNQQHQQNQSQQAAHQ). Residues 66 to 144 (PNRIFVGGFP…SRKLNLGPAI (79 aa)) form the RRM domain. Residues 195–224 (FVYPPLRSQDQSRQQSEQQTTPQNSPTNLQ) are compositionally biased toward low complexity. Disordered stretches follow at residues 195–304 (FVYP…NNGG) and 406–499 (YPGN…TKNN). The 23-residue stretch at 214–236 (TTPQNSPTNLQHQQSPQVFFGGD) folds into the DAZ domain. Basic and acidic residues predominate over residues 251–262 (EKSEVSPEKHES). The segment covering 263–279 (VSPQPLLPNQNVLNTQY) has biased composition (polar residues). Low complexity predominate over residues 280 to 304 (SQGQQQWNSNVQQQQQQQMDSNNGG). Over residues 406–425 (YPGNFSQQHTMGNNENTFSL) the composition is skewed to polar residues. The segment covering 438 to 447 (KPSECQDKKT) has biased composition (basic and acidic residues). Low complexity predominate over residues 480–499 (LSPLSASLQSLAISSPTKNN).

Belongs to the RRM DAZ family. Germline specific. More strongly expressed during oogenesis than during spermatogenesis. During the larval stages, it is more abundant at the distal region than the proximal region of the gonad. In young adult hermaphrodites, it is expressed at a very low level in the distal mitotic region of the gonad, and begins to accumulate in the meiotic transition zone. Highly expressed in the proximal pachytene region. Not expressed in mature oocytes. Not expressed in the spermatheca. Weakly or not expressed in the germline of adult males.

Functionally, RNA-binding protein that plays a central role in oogenesis, but not for spermatogenesis. Required for meiotic entry and germline differentiation, at the pachytene stage of meiosis I of female germline regardless of the sex of the soma. May act by regulating translation of specific mRNAs, possibly by binding to their 3'-UTR. The sequence is that of DAZ protein 1 (daz-1) from Caenorhabditis elegans.